The primary structure comprises 128 residues: Large ribosomal subunit protein bL12 (128 aa).

The protein belongs to the bacterial ribosomal protein bL12 family. As to quaternary structure, homodimer. Part of the ribosomal stalk of the 50S ribosomal subunit. Forms a multimeric L10(L12)X complex, where L10 forms an elongated spine to which 2 to 4 L12 dimers bind in a sequential fashion. Binds GTP-bound translation factors.

Its function is as follows. Forms part of the ribosomal stalk which helps the ribosome interact with GTP-bound translation factors. Is thus essential for accurate translation. The protein is Large ribosomal subunit protein bL12 of Thermosipho africanus (strain TCF52B).